Reading from the N-terminus, the 251-residue chain is 2,3-bisphosphoglycerate-dependent phosphoglycerate mutase (251 aa).

Substrate contacts are provided by residues 11–18 (RHGNSDWN), 24–25 (TG), R63, 90–93 (ERHY), K101, 117–118 (RR), and 185–186 (GN). H12 acts as the Tele-phosphohistidine intermediate in catalysis. The active-site Proton donor/acceptor is E90.

The protein belongs to the phosphoglycerate mutase family. BPG-dependent PGAM subfamily.

The catalysed reaction is (2R)-2-phosphoglycerate = (2R)-3-phosphoglycerate. Its pathway is carbohydrate degradation; glycolysis; pyruvate from D-glyceraldehyde 3-phosphate: step 3/5. In terms of biological role, catalyzes the interconversion of 2-phosphoglycerate and 3-phosphoglycerate. The polypeptide is 2,3-bisphosphoglycerate-dependent phosphoglycerate mutase (Clavibacter sepedonicus (Clavibacter michiganensis subsp. sepedonicus)).